The following is a 161-amino-acid chain: uncharacterized protein (161 aa).

As to quaternary structure, interacts with ribosomes.

This is an uncharacterized protein from Saccharomyces cerevisiae (strain ATCC 204508 / S288c) (Baker's yeast).